A 246-amino-acid chain; its full sequence is Biosynthetic peptidoglycan transglycosylase (246 aa).

Residues 20 to 42 traverse the membrane as a helical segment; the sequence is SLRWVLAAPLLFAAASVLQVLAL.

It belongs to the glycosyltransferase 51 family.

Its subcellular location is the cell inner membrane. The catalysed reaction is [GlcNAc-(1-&gt;4)-Mur2Ac(oyl-L-Ala-gamma-D-Glu-L-Lys-D-Ala-D-Ala)](n)-di-trans,octa-cis-undecaprenyl diphosphate + beta-D-GlcNAc-(1-&gt;4)-Mur2Ac(oyl-L-Ala-gamma-D-Glu-L-Lys-D-Ala-D-Ala)-di-trans,octa-cis-undecaprenyl diphosphate = [GlcNAc-(1-&gt;4)-Mur2Ac(oyl-L-Ala-gamma-D-Glu-L-Lys-D-Ala-D-Ala)](n+1)-di-trans,octa-cis-undecaprenyl diphosphate + di-trans,octa-cis-undecaprenyl diphosphate + H(+). It participates in cell wall biogenesis; peptidoglycan biosynthesis. Peptidoglycan polymerase that catalyzes glycan chain elongation from lipid-linked precursors. This Xanthomonas campestris pv. campestris (strain 8004) protein is Biosynthetic peptidoglycan transglycosylase.